Consider the following 635-residue polypeptide: Kelch-like protein 31 (635 aa).

In terms of domain architecture, BTB spans 74-138; the sequence is CDLTVATKSK…AYSGKLTLSL (65 aa). Residues 173–274 enclose the BACK domain; the sequence is CMYVVNIADT…TPQDLVSHVQ (102 aa). 6 Kelch repeats span residues 318–366, 367–420, 421–467, 469–514, 516–566, and 567–615; these read VLLT…VLDG, FLYV…TFNG, LLFA…VIDG, ILVS…TVGD, AYVL…TLNN, and KIYL…VVTI.

In terms of tissue distribution, strongly expressed in fast skeletal muscle, and weakly in heart. Not expressed in other tissues.

The chain is Kelch-like protein 31 (klhl31) from Danio rerio (Zebrafish).